Consider the following 89-residue polypeptide: Abortive infection protein (89 aa).

The protein resides in the cell membrane. Functionally, ABI may interact with a target in the cell membrane, which could be the product of the host's cmrA gene, and cause disruption of the cellular membrane such that lysis of the infected cell and death of the infecting phage would result. The chain is Abortive infection protein (abi) from Escherichia coli.